The following is a 118-amino-acid chain: Large ribosomal subunit protein bL20 (118 aa).

It belongs to the bacterial ribosomal protein bL20 family.

Functionally, binds directly to 23S ribosomal RNA and is necessary for the in vitro assembly process of the 50S ribosomal subunit. It is not involved in the protein synthesizing functions of that subunit. The chain is Large ribosomal subunit protein bL20 from Sulfurihydrogenibium sp. (strain YO3AOP1).